Here is a 405-residue protein sequence, read N- to C-terminus: Dynactin subunit 2 (405 aa).

The interval 1–24 (MADPKYADLPGIARNEPDVYETSD) is disordered. The stretch at 101 to 134 (PQQKYQRLLHEIQELTQEVEKAQSTVKESAAEEK) forms a coiled coil. Residues 186-207 (AKTRKNPEGKSPAKGPGPDNEN) are disordered. A coiled-coil region spans residues 383–403 (KENLATVEDNFTSIDARIKKL).

Belongs to the dynactin subunit 2 family. Subunit of dynactin, a multiprotein complex part of a tripartite complex with dynein and a adapter, such as BICDL1, BICD2 or HOOK3. The dynactin complex is built around ACTR1A/ACTB filament and consists of an actin-related filament composed of a shoulder domain, a pointed end and a barbed end. Its length is defined by its flexible shoulder domain. The soulder is composed of 2 DCTN1 subunits, 4 DCTN2 and 2 DCTN3.

It is found in the cytoplasm. The protein resides in the cytoskeleton. The protein localises to the microtubule organizing center. It localises to the centrosome. Its subcellular location is the membrane. Its function is as follows. Part of the dynactin complex that activates the molecular motor dynein for ultra-processive transport along microtubules. In the dynactin soulder domain, binds the ACTR1A filament and acts as a molecular ruler to determine the length. Modulates cytoplasmic dynein binding to an organelle, and plays a role in prometaphase chromosome alignment and spindle organization during mitosis. Involved in anchoring microtubules to centrosomes. The chain is Dynactin subunit 2 (dctn2) from Xenopus tropicalis (Western clawed frog).